The sequence spans 282 residues: ATP synthase gamma chain (282 aa).

The protein belongs to the ATPase gamma chain family. As to quaternary structure, F-type ATPases have 2 components, CF(1) - the catalytic core - and CF(0) - the membrane proton channel. CF(1) has five subunits: alpha(3), beta(3), gamma(1), delta(1), epsilon(1). CF(0) has three main subunits: a, b and c.

The protein localises to the cell membrane. Its function is as follows. Produces ATP from ADP in the presence of a proton gradient across the membrane. The gamma chain is believed to be important in regulating ATPase activity and the flow of protons through the CF(0) complex. This Clostridium botulinum (strain Loch Maree / Type A3) protein is ATP synthase gamma chain.